The following is a 1384-amino-acid chain: DNA-directed RNA polymerase subunit beta' (1384 aa).

Zn(2+)-binding residues include Cys81, Cys83, Cys96, and Cys99. Mg(2+)-binding residues include Asp472, Asp474, and Asp476.

It belongs to the RNA polymerase beta' chain family. The RNAP catalytic core consists of 2 alpha, 1 beta, 1 beta' and 1 omega subunit. When a sigma factor is associated with the core the holoenzyme is formed, which can initiate transcription. Mg(2+) is required as a cofactor. Requires Zn(2+) as cofactor.

The enzyme catalyses RNA(n) + a ribonucleoside 5'-triphosphate = RNA(n+1) + diphosphate. DNA-dependent RNA polymerase catalyzes the transcription of DNA into RNA using the four ribonucleoside triphosphates as substrates. This chain is DNA-directed RNA polymerase subunit beta', found in Opitutus terrae (strain DSM 11246 / JCM 15787 / PB90-1).